The following is a 660-amino-acid chain: DNA mismatch repair protein MutL (660 aa).

The segment at 414–433 (SSVKHASRPQNTFTETDHPN) is disordered.

Belongs to the DNA mismatch repair MutL/HexB family.

In terms of biological role, this protein is involved in the repair of mismatches in DNA. It is required for dam-dependent methyl-directed DNA mismatch repair. May act as a 'molecular matchmaker', a protein that promotes the formation of a stable complex between two or more DNA-binding proteins in an ATP-dependent manner without itself being part of a final effector complex. The protein is DNA mismatch repair protein MutL of Streptococcus pyogenes serotype M6 (strain ATCC BAA-946 / MGAS10394).